Reading from the N-terminus, the 431-residue chain is Glucose-1-phosphate adenylyltransferase (431 aa).

Residues Gly-163, 178 to 179 (EK), and Ser-210 contribute to the alpha-D-glucose 1-phosphate site.

Belongs to the bacterial/plant glucose-1-phosphate adenylyltransferase family. As to quaternary structure, homotetramer.

The enzyme catalyses alpha-D-glucose 1-phosphate + ATP + H(+) = ADP-alpha-D-glucose + diphosphate. Its pathway is glycan biosynthesis; glycogen biosynthesis. Functionally, involved in the biosynthesis of ADP-glucose, a building block required for the elongation reactions to produce glycogen. Catalyzes the reaction between ATP and alpha-D-glucose 1-phosphate (G1P) to produce pyrophosphate and ADP-Glc. In Synechococcus sp. (strain WH7803), this protein is Glucose-1-phosphate adenylyltransferase.